Reading from the N-terminus, the 268-residue chain is Tryptophan synthase alpha chain (268 aa).

Residues glutamate 49 and aspartate 60 each act as proton acceptor in the active site.

Belongs to the TrpA family. In terms of assembly, tetramer of two alpha and two beta chains.

It catalyses the reaction (1S,2R)-1-C-(indol-3-yl)glycerol 3-phosphate + L-serine = D-glyceraldehyde 3-phosphate + L-tryptophan + H2O. The protein operates within amino-acid biosynthesis; L-tryptophan biosynthesis; L-tryptophan from chorismate: step 5/5. The alpha subunit is responsible for the aldol cleavage of indoleglycerol phosphate to indole and glyceraldehyde 3-phosphate. The chain is Tryptophan synthase alpha chain from Citrobacter koseri (strain ATCC BAA-895 / CDC 4225-83 / SGSC4696).